We begin with the raw amino-acid sequence, 573 residues long: Sulfite reductase [NADPH] hemoprotein beta-component (573 aa).

[4Fe-4S] cluster-binding residues include Cys-438, Cys-444, Cys-483, and Cys-487. Siroheme is bound at residue Cys-487.

This sequence belongs to the nitrite and sulfite reductase 4Fe-4S domain family. In terms of assembly, alpha(8)-beta(8). The alpha component is a flavoprotein, the beta component is a hemoprotein. Siroheme serves as cofactor. It depends on [4Fe-4S] cluster as a cofactor.

The catalysed reaction is hydrogen sulfide + 3 NADP(+) + 3 H2O = sulfite + 3 NADPH + 4 H(+). It functions in the pathway sulfur metabolism; hydrogen sulfide biosynthesis; hydrogen sulfide from sulfite (NADPH route): step 1/1. Component of the sulfite reductase complex that catalyzes the 6-electron reduction of sulfite to sulfide. This is one of several activities required for the biosynthesis of L-cysteine from sulfate. In Geobacillus thermodenitrificans (strain NG80-2), this protein is Sulfite reductase [NADPH] hemoprotein beta-component.